A 388-amino-acid chain; its full sequence is Succinate--CoA ligase [ADP-forming] subunit beta (388 aa).

The 236-residue stretch at 9–244 folds into the ATP-grasp domain; it reads KQLFAEFGLP…PSQEDEREAH (236 aa). ATP-binding positions include K46, 53–55, E99, S102, and E107; that span reads GRG. Residues N199 and D213 each coordinate Mg(2+). Residues N264 and 321 to 323 contribute to the substrate site; that span reads GIV.

The protein belongs to the succinate/malate CoA ligase beta subunit family. In terms of assembly, heterotetramer of two alpha and two beta subunits. It depends on Mg(2+) as a cofactor.

It catalyses the reaction succinate + ATP + CoA = succinyl-CoA + ADP + phosphate. The enzyme catalyses GTP + succinate + CoA = succinyl-CoA + GDP + phosphate. It participates in carbohydrate metabolism; tricarboxylic acid cycle; succinate from succinyl-CoA (ligase route): step 1/1. In terms of biological role, succinyl-CoA synthetase functions in the citric acid cycle (TCA), coupling the hydrolysis of succinyl-CoA to the synthesis of either ATP or GTP and thus represents the only step of substrate-level phosphorylation in the TCA. The beta subunit provides nucleotide specificity of the enzyme and binds the substrate succinate, while the binding sites for coenzyme A and phosphate are found in the alpha subunit. The polypeptide is Succinate--CoA ligase [ADP-forming] subunit beta (Vibrio campbellii (strain ATCC BAA-1116)).